The following is a 172-amino-acid chain: MDLRKKIRIVEDFPIEGISFKDVTPILKDPKAMKHTTKEITKYLEDKNVDVIVGPEARGFLFGIPVAHELDIGFVPVRKPGKLPYKTFSVDYALEYGADSLEIHSDGIEKGQNVAIVDDLLATGGTVLGVSKLVEKLGGHVSALNFVIELTELKGRDKLKGYGIQSLVKYDL.

Belongs to the purine/pyrimidine phosphoribosyltransferase family. Homodimer.

It localises to the cytoplasm. The enzyme catalyses AMP + diphosphate = 5-phospho-alpha-D-ribose 1-diphosphate + adenine. The protein operates within purine metabolism; AMP biosynthesis via salvage pathway; AMP from adenine: step 1/1. Functionally, catalyzes a salvage reaction resulting in the formation of AMP, that is energically less costly than de novo synthesis. The protein is Adenine phosphoribosyltransferase of Methanococcus maripaludis (strain C5 / ATCC BAA-1333).